The primary structure comprises 410 residues: Diguanylate cyclase DgcM (410 aa).

PAS domains are found at residues Thr-3–Asp-70 and Gly-129–Gly-198. A PAC domain is found at Gly-199–His-251. Positions Gln-283–Ala-410 constitute a GGDEF domain. Residue Asp-291 participates in Mg(2+) binding. Substrate contacts are provided by Asn-299, His-304, and Asp-308. Residue Glu-334 participates in Mg(2+) binding. Residue Glu-334 is the Proton acceptor of the active site.

It depends on Mg(2+) as a cofactor.

The catalysed reaction is 2 GTP = 3',3'-c-di-GMP + 2 diphosphate. The protein operates within purine metabolism; 3',5'-cyclic di-GMP biosynthesis. Functionally, part of a signaling cascade that regulates curli biosynthesis. The cascade is composed of two cyclic-di-GMP (c-di-GMP) control modules, in which c-di-GMP controlled by the DgcE/PdeH pair (module I) regulates the activity of the DgcM/PdeR pair (module II), which in turn regulates activity of the transcription factor MlrA and expression of the master biofilm regulator csgD. This Escherichia coli O157:H7 protein is Diguanylate cyclase DgcM.